The following is a 437-amino-acid chain: Probable peptidoglycan-N-acetylglucosamine deacetylase ARB_03699 (437 aa).

The first 20 residues, 1-20 (MLMRLYTFFAAALLACCAAA), serve as a signal peptide directing secretion. Residues 47 to 132 (STRAATTTTT…STSAAAPSTP (86 aa)) form a disordered region. N-linked (GlcNAc...) asparagine glycosylation occurs at Asn-99. Residues 149–334 (GTVAITFDDG…EVKRRGLKAV (186 aa)) enclose the NodB homology domain. Asp-156 acts as the Proton acceptor in catalysis. The Zn(2+) site is built by Asp-157, His-209, and His-213. Tyr-251 contacts substrate. His-308 functions as the Proton donor in the catalytic mechanism. Positions 350–370 (TTPVQVPTGTSTTSPTATPTS) are enriched in low complexity. The disordered stretch occupies residues 350–384 (TTPVQVPTGTSTTSPTATPTSPGTPPPAPTQPGVA). In terms of domain architecture, LysM spans 389–435 (KWHTVVSGDTCYDIAAANGISLDNLYKWNPAVGTSCASLWLGYAVCV).

The cofactor is Zn(2+). It depends on Co(2+) as a cofactor.

The protein resides in the secreted. It catalyses the reaction peptidoglycan-N-acetyl-D-glucosamine + H2O = peptidoglycan-D-glucosamine + acetate.. Catalyzes the deacetylation of N-acetylglucosamine (GlcNAc) residues in peptidoglycan. This chain is Probable peptidoglycan-N-acetylglucosamine deacetylase ARB_03699, found in Arthroderma benhamiae (strain ATCC MYA-4681 / CBS 112371) (Trichophyton mentagrophytes).